We begin with the raw amino-acid sequence, 528 residues long: Sensory rhodopsin I transducer (528 aa).

Transmembrane regions (helical) follow at residues 11-31 (GAKL…VGVV) and 35-55 (VAST…INAA). 2 HAMP domains span residues 55 to 107 (AETV…DRLS) and 142 to 195 (TAYQ…ETIE). Residues 214–455 (TSRRVQQEVD…ATADSIADVT (242 aa)) enclose the Methyl-accepting transducer domain. The residue at position 259 (Glu259) is a Glutamate methyl ester (Glu).

The protein belongs to the methyl-accepting chemotaxis (MCP) protein family. Interacts with Sop1.

The protein localises to the cell membrane. Its function is as follows. Transduces signals from the phototaxis receptor sensory rhodopsin I (Sop1). This chain is Sensory rhodopsin I transducer (htr1), found in Haloarcula marismortui (strain ATCC 43049 / DSM 3752 / JCM 8966 / VKM B-1809) (Halobacterium marismortui).